Reading from the N-terminus, the 378-residue chain is MVTSSSVIVLTLWAALVSASPVADPLVTPAPKLEDLEKRATSCTFSGSEGASSASKSKTSCSTIVLSDVAVPSGTTLDLTDLNDGTHVIFEGETTFGYEEWSGPLVSVSGTDITVTGADGAYLNGDGSRWWDGEGSNGGKTKPKFFYAHDLTSSTISGIYIQNSPVQVFSIDGSTYLTMEDITIDNTDGDDGEAANTDGFDIGDSTYITITGANVYNQDDCVAVNSGENIYFSGGVCSGGHGLSIGSVGGRSDNTVKNVTFYDSEIKSSQNGVRIKTIYGDTGSVSEVTYKEITLSDITDYGIVVEQNYDDTSKSPTDGITIEDFVLDNVQGSVESSGTNIYIVCGSDSCTDWTWTDVDVSGGKTSSDCENVPDDISC.

Positions 1–19 (MVTSSSVIVLTLWAALVSA) are cleaved as a signal peptide. Residues 20–38 (SPVADPLVTPAPKLEDLEK) constitute a propeptide that is removed on maturation. A disulfide bridge connects residues Cys43 and Cys61. PbH1 repeat units follow at residues 103–125 (GPLV…YLNG), 174–204 (STYL…DIGD), and 205–226 (STYI…AVNS). Residue Asp219 is the Proton donor of the active site. An intrachain disulfide couples Cys221 to Cys237. His241 is an active-site residue. PbH1 repeat units follow at residues 256 to 277 (VKNV…RIKT), 285 to 307 (VSEV…VVEQ), and 317 to 345 (TDGI…YIVC). Asn258 is a glycosylation site (N-linked (GlcNAc...) asparagine). 2 disulfides stabilise this stretch: Cys345-Cys350 and Cys369-Cys378.

It belongs to the glycosyl hydrolase 28 family.

Its subcellular location is the secreted. It catalyses the reaction (1,4-alpha-D-galacturonosyl)n+m + H2O = (1,4-alpha-D-galacturonosyl)n + (1,4-alpha-D-galacturonosyl)m.. Functionally, involved in maceration and soft-rotting of plant tissue. Hydrolyzes the 1,4-alpha glycosidic bonds of de-esterified pectate in the smooth region of the plant cell wall. The sequence is that of Probable endopolygalacturonase E (pgaE) from Aspergillus niger (strain ATCC MYA-4892 / CBS 513.88 / FGSC A1513).